We begin with the raw amino-acid sequence, 181 residues long: MPYKTAIDCIEELATQCFLSKLTDDDVSTFRRVCSKENDIIKLALRIPRTIDYTSILRLLYDTLPLRSLSFNEALPLFCYSIDPAQQRQCDLRFYLRDVVKLARPRKRLEMQKALLQWLPSLLSDVTLQLLNDIRIRFEEIQPNIRQTVLQIYDRTCYPSLNFEHPNLGVFPETDSIFEPV.

Functionally, plays a role in 2-micron plasmid partitioning. Antagonizes transcriptional repression of recombinase FLP by REP1-REP2. Regulates both stability and copy number of the plasmid by blocking the formation of the REP1-REP2 repressor complex. The protein is Trans-acting factor D of Saccharomyces cerevisiae (strain ATCC 204508 / S288c) (Baker's yeast).